Consider the following 370-residue polypeptide: Probable neutral protease 2 homolog ARB_03949 (370 aa).

Positions 1-19 are cleaved as a signal peptide; the sequence is MQLVAALAALGALVAPAVA. Residues 20-188 constitute a propeptide that is removed on maturation; it reads YPHAPMNETL…SIHSRALQKR (169 aa). 2 disulfides stabilise this stretch: C196–C267 and C274–C292. H316 contributes to the Zn(2+) binding site. Residue E317 is part of the active site. Zn(2+) is bound by residues H320 and D331.

It belongs to the peptidase M35 family. The cofactor is Zn(2+).

Its subcellular location is the secreted. The catalysed reaction is Preferential cleavage of bonds with hydrophobic residues in P1'. Also 3-Asn-|-Gln-4 and 8-Gly-|-Ser-9 bonds in insulin B chain.. Functionally, probable secreted metalloprotease that shows high activities on basic nuclear substrates such as histone and protamine. May be involved in virulence. The polypeptide is Probable neutral protease 2 homolog ARB_03949 (Arthroderma benhamiae (strain ATCC MYA-4681 / CBS 112371) (Trichophyton mentagrophytes)).